Reading from the N-terminus, the 201-residue chain is MSRYRGPRVRIIRRLGVLPGLTNKTPQLKSSSANQSTAKKISQYRIRLEEKQKLRFHYGITERQLLNYVRIARKAKGSTGQILLQLLEMRLDNIVFRLGMAPTIPGARQLVNHRHVLVNDCIVDIPSYRCKPEDSITVKNRQKSQAIITKNIDFSQKSKVPNHLTFDSTQKKGLVNQILDRESIGLKINELLVVEYYSRQA.

Positions 89–150 constitute an S4 RNA-binding domain; it reads MRLDNIVFRL…RQKSQAIITK (62 aa).

Belongs to the universal ribosomal protein uS4 family. Part of the 30S ribosomal subunit. Contacts protein S5. The interaction surface between S4 and S5 is involved in control of translational fidelity.

It is found in the plastid. Its subcellular location is the chloroplast. Its function is as follows. One of the primary rRNA binding proteins, it binds directly to 16S rRNA where it nucleates assembly of the body of the 30S subunit. With S5 and S12 plays an important role in translational accuracy. This is Small ribosomal subunit protein uS4c (rps4) from Physcomitrium patens (Spreading-leaved earth moss).